Here is a 221-residue protein sequence, read N- to C-terminus: Transmembrane emp24 domain-containing protein 3 (221 aa).

Residues 1 to 30 (MGNEVPRASSFQMLMLLLLLLLLRAERLRG) form the signal peptide. Over 31-184 (AELTFELPDN…RAEDLNSRVS (154 aa)) the chain is Lumenal. Positions 42-124 (KQCFHEEVEQ…HKTVYFDFQV (83 aa)) constitute a GOLD domain. A Dimethylated arginine modification is found at Arg-103. The helical transmembrane segment at 185 to 205 (YWSVGETIALFVVSFSQVLLL) threads the bilayer. The Cytoplasmic segment spans residues 206-221 (KSFFTEKRPINRAVHS). A COPII vesicle coat-binding motif is present at residues 208–209 (FF). The COPI vesicle coat-binding motif lies at 208–221 (FFTEKRPINRAVHS).

Belongs to the EMP24/GP25L family. Monomer in endoplasmic reticulum, endoplasmic reticulum-Golgi intermediate compartment and cis-Golgi network. Interacts (via C-terminus) with COPG1; the interaction involves dimeric TMED3; however, there are conflicting reports on the interaction. Interacts with GORASP1 and GORASP2.

It is found in the endoplasmic reticulum-Golgi intermediate compartment membrane. Its subcellular location is the golgi apparatus. The protein localises to the cis-Golgi network membrane. It localises to the golgi stack membrane. The protein resides in the endoplasmic reticulum membrane. It is found in the cytoplasmic vesicle. Its subcellular location is the COPI-coated vesicle membrane. Potential role in vesicular protein trafficking, mainly in the early secretory pathway. Contributes to the coupled localization of TMED2 and TMED10 in the cis-Golgi network. This chain is Transmembrane emp24 domain-containing protein 3 (Tmed3), found in Rattus norvegicus (Rat).